The following is a 639-amino-acid chain: 3D-(3,5/4)-trihydroxycyclohexane-1,2-dione hydrolase (639 aa).

Position 65 (glutamate 65) interacts with thiamine diphosphate. Positions 437–517 (SLPGDLQRMW…INIILFDNSG (81 aa)) are thiamine pyrophosphate binding. 2 residues coordinate Mg(2+): aspartate 488 and asparagine 515.

It belongs to the TPP enzyme family. It depends on Mg(2+) as a cofactor. The cofactor is thiamine diphosphate.

The enzyme catalyses 3D-3,5/4-trihydroxycyclohexane-1,2-dione + H2O = 5-deoxy-D-glucuronate + H(+). It functions in the pathway polyol metabolism; myo-inositol degradation into acetyl-CoA; acetyl-CoA from myo-inositol: step 3/7. Involved in the cleavage of the C1-C2 bond of 3D-(3,5/4)-trihydroxycyclohexane-1,2-dione (THcHDO) to yield 5-deoxy-glucuronate (5DG). The sequence is that of 3D-(3,5/4)-trihydroxycyclohexane-1,2-dione hydrolase from Geobacillus thermodenitrificans (strain NG80-2).